Consider the following 278-residue polypeptide: Juvenile hormone acid O-methyltransferase (278 aa).

The protein belongs to the methyltransferase superfamily. As to expression, specifically expressed in the corpora allata (CA).

The catalysed reaction is (2E,6E)-farnesoate + S-adenosyl-L-methionine = methyl (2E,6E)-farnesoate + S-adenosyl-L-homocysteine. It catalyses the reaction juvenile hormone III carboxylate + S-adenosyl-L-methionine = juvenile hormone III + S-adenosyl-L-homocysteine. O-methyltransferase that transfers a methyl group from S-adenosyl-L-methionine (SAM) to the carboxyl group of juvenile hormone acids to produce active juvenile hormones in the corpora allata, the last step during juvenile hormone biosynthesis. Also able to methylate farnesoate to methyl farnesoate. In Bombyx mori (Silk moth), this protein is Juvenile hormone acid O-methyltransferase.